Consider the following 463-residue polypeptide: Argininosuccinate lyase (463 aa).

Belongs to the lyase 1 family. Argininosuccinate lyase subfamily.

It is found in the cytoplasm. It carries out the reaction 2-(N(omega)-L-arginino)succinate = fumarate + L-arginine. It participates in amino-acid biosynthesis; L-arginine biosynthesis; L-arginine from L-ornithine and carbamoyl phosphate: step 3/3. This chain is Argininosuccinate lyase, found in Ruegeria pomeroyi (strain ATCC 700808 / DSM 15171 / DSS-3) (Silicibacter pomeroyi).